A 209-amino-acid chain; its full sequence is Ribosomal RNA large subunit methyltransferase E (209 aa).

Residues glycine 63, tryptophan 65, aspartate 83, aspartate 99, and aspartate 124 each contribute to the S-adenosyl-L-methionine site. Lysine 164 serves as the catalytic Proton acceptor.

Belongs to the class I-like SAM-binding methyltransferase superfamily. RNA methyltransferase RlmE family.

The protein resides in the cytoplasm. It catalyses the reaction uridine(2552) in 23S rRNA + S-adenosyl-L-methionine = 2'-O-methyluridine(2552) in 23S rRNA + S-adenosyl-L-homocysteine + H(+). Specifically methylates the uridine in position 2552 of 23S rRNA at the 2'-O position of the ribose in the fully assembled 50S ribosomal subunit. This is Ribosomal RNA large subunit methyltransferase E from Tolumonas auensis (strain DSM 9187 / NBRC 110442 / TA 4).